The sequence spans 233 residues: Lysoplasmalogenase TMEM86B (233 aa).

The Cytoplasmic portion of the chain corresponds to 1–30; it reads MPCCDPYPWIGLNVGRLSSFPLLKYPQVRR. The helical transmembrane segment at 31-47 threads the bilayer; sequence WLAPFIVACSLYFLLWI. The Extracellular portion of the chain corresponds to 48–53; the sequence is PEDQPS. A helical transmembrane segment spans residues 54–75; it reads WVSALVKCQPILCLVLFLWAVA. Over 76–81 the chain is Cytoplasmic; it reads PGGSYT. The helical transmembrane segment at 82-100 threads the bilayer; that stretch reads WLLQGALTCSAVGDACLIW. Residues 101 to 106 are Extracellular-facing; the sequence is PEAFFY. The helical transmembrane segment at 107-124 threads the bilayer; the sequence is GMAVFSVAHLLYLWAFGL. At 125 to 130 the chain is on the cytoplasmic side; sequence SPLQPG. The chain crosses the membrane as a helical span at residues 131 to 147; that stretch reads LLLCTTLASLTYYSFLL. The Extracellular portion of the chain corresponds to 148–153; the sequence is LHLEPN. The helical transmembrane segment at 154–170 threads the bilayer; sequence MVLPVAAYGLILNTMLW. The Cytoplasmic segment spans residues 171–178; the sequence is RGLVLGRS. The chain crosses the membrane as a helical span at residues 179 to 195; it reads AGWGAVLFIFSDGVLAW. Topologically, residues 196–206 are extracellular; the sequence is DTFVYTLPFAR. A helical transmembrane segment spans residues 207-225; sequence LVTMSTYYAAQLLLTLSAL. Topologically, residues 226–233 are cytoplasmic; that stretch reads RSPGLKTH.

The protein belongs to the TMEM86 family. As to quaternary structure, homodimer.

Its subcellular location is the endoplasmic reticulum membrane. The protein localises to the cytoplasm. It catalyses the reaction a 1-O-(1Z-alkenyl)-sn-glycero-3-phosphocholine + H2O = a 2,3-saturated aldehyde + sn-glycerol 3-phosphocholine. The catalysed reaction is a 1-O-(1Z-alkenyl)-sn-glycero-3-phosphoethanolamine + H2O = a 2,3-saturated aldehyde + sn-glycero-3-phosphoethanolamine. Competitively inhibited by lysophosphatidic acid. Functionally, catalyzes the hydrolysis of the vinyl ether bond of choline or ethanolamine lysoplasmalogens, forming fatty aldehyde and glycerophosphocholine or glycerophosphoethanolamine, respectively and is specific for the sn-2-deacylated (lyso) form of plasmalogen. The chain is Lysoplasmalogenase TMEM86B (Tmem86b) from Rattus norvegicus (Rat).